A 445-amino-acid polypeptide reads, in one-letter code: Xylose isomerase (445 aa).

Residues H107 and D110 contribute to the active site. Positions 238, 274, 277, 302, 313, 315, and 345 each coordinate Mg(2+).

This sequence belongs to the xylose isomerase family. As to quaternary structure, homotetramer. Mg(2+) serves as cofactor.

Its subcellular location is the cytoplasm. The enzyme catalyses alpha-D-xylose = alpha-D-xylulofuranose. This chain is Xylose isomerase (xylA), found in Bacillus spizizenii (strain ATCC 23059 / NRRL B-14472 / W23) (Bacillus subtilis subsp. spizizenii).